A 214-amino-acid chain; its full sequence is 3,4-dihydroxy-2-butanone 4-phosphate synthase (214 aa).

D-ribulose 5-phosphate contacts are provided by residues 37–38, Asp-42, 150–154, and Glu-174; these read RE and RRGHT. A Mg(2+)-binding site is contributed by Glu-38. A Mg(2+)-binding site is contributed by His-153.

This sequence belongs to the DHBP synthase family. As to quaternary structure, homodimer. The cofactor is Mg(2+). Mn(2+) serves as cofactor.

It catalyses the reaction D-ribulose 5-phosphate = (2S)-2-hydroxy-3-oxobutyl phosphate + formate + H(+). It functions in the pathway cofactor biosynthesis; riboflavin biosynthesis; 2-hydroxy-3-oxobutyl phosphate from D-ribulose 5-phosphate: step 1/1. Catalyzes the conversion of D-ribulose 5-phosphate to formate and 3,4-dihydroxy-2-butanone 4-phosphate. This Nitratidesulfovibrio vulgaris (strain ATCC 29579 / DSM 644 / CCUG 34227 / NCIMB 8303 / VKM B-1760 / Hildenborough) (Desulfovibrio vulgaris) protein is 3,4-dihydroxy-2-butanone 4-phosphate synthase.